A 182-amino-acid chain; its full sequence is Adenine phosphoribosyltransferase (182 aa).

It belongs to the purine/pyrimidine phosphoribosyltransferase family. In terms of assembly, homodimer.

Its subcellular location is the cytoplasm. It catalyses the reaction AMP + diphosphate = 5-phospho-alpha-D-ribose 1-diphosphate + adenine. It participates in purine metabolism; AMP biosynthesis via salvage pathway; AMP from adenine: step 1/1. Catalyzes a salvage reaction resulting in the formation of AMP, that is energically less costly than de novo synthesis. The sequence is that of Adenine phosphoribosyltransferase from Pseudomonas entomophila (strain L48).